Consider the following 332-residue polypeptide: mRNA-decapping enzyme 1 (332 aa).

The segment covering 141-173 (ARAAKAASEAPQASVPAPTQAPAAPAQAPQMAP) has biased composition (low complexity). The disordered stretch occupies residues 141-175 (ARAAKAASEAPQASVPAPTQAPAAPAQAPQMAPQA).

The protein belongs to the DCP1 family. In terms of assembly, may be a component of the decapping complex composed of dcap-1 and dcap-2. In terms of tissue distribution, expressed in neurons including touch receptor neurons and motor neurons.

The protein localises to the cytoplasm. Its subcellular location is the cytoplasmic granule. Functionally, component of the decapping complex necessary for the degradation of mRNAs, both in normal mRNA turnover and in nonsense-mediated mRNA decay. In contrast to orthologs, does not possess decapping activity and does not remove the 7-methyl guanine cap structure from mRNA molecules. In the nervous system, negatively regulates the expression of insulin-like peptide ins-7, which in turn promotes longevity. This may in part be through promoting the activity of daf-16 in distal tissues. Required for the developmental axon guidance and regrowth of PLM touch receptor neurons. In ADL sensory neurons, plays a role in ciliary shape formation. Acts in neurons to promote larval survival at high temperatures by negatively regulating lin-14 expression. The polypeptide is mRNA-decapping enzyme 1 (Caenorhabditis elegans).